The chain runs to 383 residues: UDP-D-xylose:L-fucose alpha-1,3-D-xylosyltransferase 3 (383 aa).

Topologically, residues 1–20 (MAQQSQRPISNRHISLLNRN) are cytoplasmic. Residues 21 to 41 (GLILLLLLALFVILGVFLPLT) traverse the membrane as a helical; Signal-anchor for type II membrane protein segment. The Lumenal portion of the chain corresponds to 42-383 (KSSLFMFPNT…KNRGKKHKLP (342 aa)). Residues N50, N82, and N157 are each glycosylated (N-linked (GlcNAc...) asparagine). A DXD motif motif is present at residues 180–182 (DVD). 6 N-linked (GlcNAc...) asparagine glycosylation sites follow: N212, N258, N301, N306, N357, and N364.

It belongs to the glycosyltransferase 77 family. Mn(2+) is required as a cofactor. Requires Mg(2+) as cofactor. In terms of processing, glycosylated. As to expression, expressed around trichome support cells in the adaxial epidermis of rosette leaves, in cauline leaves, petals and both the proximal and distal ends of siliques.

Its subcellular location is the golgi apparatus membrane. In terms of biological role, catalyzes the transfer of D-xylose from UDP-alpha-D-xylose onto L-fucose. Probably involved in the biosynthesis of rhamnogalacturonan II (RG-II) through xylosylation of the internal fucose moiety of the A-chain of RG-II, a structurally complex pectic polysaccharide of the primary cell wall. RG-II is essential for the cell wall integrity of rapidly growing tissues such as roots and pollen tube growth and elongation. This is UDP-D-xylose:L-fucose alpha-1,3-D-xylosyltransferase 3 from Arabidopsis thaliana (Mouse-ear cress).